Consider the following 385-residue polypeptide: Succinyl-diaminopimelate desuccinylase (385 aa).

Zn(2+) is bound at residue His73. Asp75 is an active-site residue. Residue Asp106 coordinates Zn(2+). Glu141 serves as the catalytic Proton acceptor. Residues Glu142, Glu170, and His359 each contribute to the Zn(2+) site.

It belongs to the peptidase M20A family. DapE subfamily. In terms of assembly, homodimer. It depends on Zn(2+) as a cofactor. Co(2+) is required as a cofactor.

It carries out the reaction N-succinyl-(2S,6S)-2,6-diaminopimelate + H2O = (2S,6S)-2,6-diaminopimelate + succinate. Its pathway is amino-acid biosynthesis; L-lysine biosynthesis via DAP pathway; LL-2,6-diaminopimelate from (S)-tetrahydrodipicolinate (succinylase route): step 3/3. Its function is as follows. Catalyzes the hydrolysis of N-succinyl-L,L-diaminopimelic acid (SDAP), forming succinate and LL-2,6-diaminopimelate (DAP), an intermediate involved in the bacterial biosynthesis of lysine and meso-diaminopimelic acid, an essential component of bacterial cell walls. This chain is Succinyl-diaminopimelate desuccinylase, found in Methylorubrum extorquens (strain PA1) (Methylobacterium extorquens).